The primary structure comprises 280 residues: Four and a half LIM domains protein 1 (280 aa).

Ser2 is subject to N-acetylserine. Lys4 is modified (N6-acetyllysine). The C4-type zinc finger occupies 7 to 31 (CHYCRDPLQGKKYVQKDGRHCCLKC). 4 consecutive LIM zinc-binding domains span residues 40 to 92 (CVDC…CNKC), 101 to 153 (CKGC…CVTC), 162 to 212 (CVKC…CVDC), and 221 to 276 (CAGC…CPDC). Lys86 participates in a covalent cross-link: Glycyl lysine isopeptide (Lys-Gly) (interchain with G-Cter in SUMO2).

As to expression, isoform 1 seems to be most abundant in each tissue and isoform 2 much less abundant. Isoform 1 is highly expressed in skeletal muscle and lung, and to a lesser extent in heart, brain and kidney. Isoform 2 was found in brain, lung kidney and genital organs.

The protein resides in the cytoplasm. Its subcellular location is the nucleus. Its function is as follows. May have an involvement in muscle development or hypertrophy. Isoform 2 binds to RBP-J and plays a negative regulatory role in the RBP-J-mediated transcription in mammalian systems. This chain is Four and a half LIM domains protein 1 (Fhl1), found in Mus musculus (Mouse).